We begin with the raw amino-acid sequence, 125 residues long: C-X-C motif chemokine 9 (125 aa).

The signal sequence occupies residues 1 to 22 (MKKSGVLFLLGIILLVLIGVQG). 2 disulfides stabilise this stretch: Cys31-Cys58 and Cys33-Cys74. The segment at 93 to 125 (VSQKKKQKNGKKHQKKKVLKVRKSQRSRQKKTT) is disordered. Positions 94 to 125 (SQKKKQKNGKKHQKKKVLKVRKSQRSRQKKTT) are enriched in basic residues.

This sequence belongs to the intercrine alpha (chemokine CxC) family.

The protein resides in the secreted. In terms of biological role, cytokine that affects the growth, movement, or activation state of cells that participate in immune and inflammatory response. Chemotactic for activated T-cells. Binds to CXCR3. In Homo sapiens (Human), this protein is C-X-C motif chemokine 9 (CXCL9).